The chain runs to 360 residues: MVSKQAFLFSLGSLYLSLLFIFLLMDVYARPANNSALKVETKEKATDNKDENEILPPDHLNGVKMEMDGHLNKEFHQEVFLGKELEEFDEDSEPRRNRRKLAAIFAKVDRNEDKQISASEMQRWIMEKTEEHFQEAVNENKLHFRAVDPDGDGHVSWDEYKIKFLASKGFNEKEVAEKLKNNEDLKIDEETQEVLDNLKDRWFQADNPPPDQLLNEEEFLSFLHPEHSRGMLKFMVKEIIRDLDQDGDKKLTLSEFISLPVGTVENQQAQDIDDDWVRDRKKEYEEVIDANHDGIVTMEELEEYMDPMNEYNALNEAKQMIAVADENQDHLLSLEEILKYSEYFTGSKLMDYARNVHEEF.

The first 29 residues, 1-29 (MVSKQAFLFSLGSLYLSLLFIFLLMDVYA), serve as a signal peptide directing secretion. N33 is a glycosylation site (N-linked (GlcNAc...) asparagine). EF-hand domains are found at residues 96 to 131 (RNRR…KTEE), 135 to 170 (EAVN…SKGF), 231 to 266 (MLKF…TVEN), 276 to 311 (WVRD…MNEY), and 312 to 347 (NALN…FTGS). D109, N111, D113, Q115, E120, D148, D150, D152, H154, E159, D244, D246, D248, K250, E255, D289, N291, D293, E300, D325, N327, D329, and E336 together coordinate Ca(2+).

The protein belongs to the CREC family.

Its subcellular location is the golgi apparatus lumen. In terms of biological role, may regulate calcium-dependent activities in the endoplasmic reticulum lumen or post-ER compartment. The chain is 45 kDa calcium-binding protein (sdf4) from Xenopus laevis (African clawed frog).